The sequence spans 257 residues: Acetylglutamate kinase (257 aa).

Residues 41–42 (GG), R63, and N158 each bind substrate.

Belongs to the acetylglutamate kinase family. ArgB subfamily.

It localises to the cytoplasm. The enzyme catalyses N-acetyl-L-glutamate + ATP = N-acetyl-L-glutamyl 5-phosphate + ADP. It participates in amino-acid biosynthesis; L-arginine biosynthesis; N(2)-acetyl-L-ornithine from L-glutamate: step 2/4. Catalyzes the ATP-dependent phosphorylation of N-acetyl-L-glutamate. The protein is Acetylglutamate kinase of Bacteroides thetaiotaomicron (strain ATCC 29148 / DSM 2079 / JCM 5827 / CCUG 10774 / NCTC 10582 / VPI-5482 / E50).